A 1906-amino-acid chain; its full sequence is Zinc metalloprotease ZmpB (1906 aa).

Residues 1–33 form the signal peptide; it reads MFKKDRFSIRKIKGVVGSVFLGSLLMAPSVVDA. The propeptide occupies 34-76; that stretch reads ATYHYVNKEIISQEAKDLIQTGKPDRNEVVYGLVYQKDQLPQT. The LPXTG sorting signal signature appears at 73–77; it reads LPQTG. Pentaglycyl murein peptidoglycan amidated threonine is present on Thr-76. The next 2 membrane-spanning stretches (helical) occupy residues 77–98 and 105–127; these read GTEA…LLIY and SVFL…DPVA. At 128–1906 the chain is on the extracellular side; sequence TLALASREGV…TNSFKTSIFK (1779 aa). The disordered stretch occupies residues 178–436; it reads VETPQSITNQ…KASSVSPTDY (259 aa). Residues 181 to 196 are compositionally biased toward polar residues; sequence PQSITNQEQARTENQV. Basic and acidic residues-rich tracts occupy residues 201–239, 252–262, 271–335, 352–375, and 383–408; these read EAPK…KEDS, VESKPEEKVAV, KPAE…KEET, KQTE…REDE, and EPEK…DKIK. Repeat copies occupy residues 277 to 291, 293 to 315, 361 to 375, and 380 to 402. Residues 277–375 are 2 X 15 AA repeats of K-V-E-Q-A-G-E-P-V-A-P-R-E-D-E; sequence KVEQAGEPVA…GEPVAPREDE (99 aa). The tract at residues 293–375 is 2 X 23 AA approximate repeats; that stretch reads APVEPEKQPE…GEPVAPREDE (83 aa). Residues 421 to 436 are compositionally biased toward polar residues; it reads LNNQIDKASSVSPTDY. Residue His-1562 participates in Zn(2+) binding. The active site involves Glu-1563. The Zn(2+) site is built by His-1566 and Glu-1586.

This sequence belongs to the peptidase M26 family. The cofactor is Zn(2+). In terms of processing, the Gram-positive cell-wall anchor motif LPXTG is located in the N-terminal part, in contrast to such motifs in other known streptococcal and staphylococcal proteins. The protease could be cleaved by the sortase and anchored in the membrane via the two potential N-terminal transmembrane domains, whereas the propeptide located prior to the LPXTG motif would remain attached to the cell wall peptidoglycan by an amide bond.

The protein localises to the secreted. Its subcellular location is the cell wall. It is found in the membrane. Functionally, is a virulence factor capable of inducing inflammation in the lower respiratory tract, by increasing tumor necrosis factor alpha (TNF-alpha) concentration in the lungs. Also appears to have other functions important in virulence in models of pneumonia and septicemia. The chain is Zinc metalloprotease ZmpB (zmpB) from Streptococcus pneumoniae serotype 4 (strain ATCC BAA-334 / TIGR4).